We begin with the raw amino-acid sequence, 422 residues long: 5-hydroxytryptamine receptor 1A (422 aa).

The Extracellular portion of the chain corresponds to 1-38 (MDVFSFGQGNNTTASQEPFGTGGNVTSISDVTFSYQVI). N-linked (GlcNAc...) asparagine glycosylation is found at asparagine 10, asparagine 11, and asparagine 24. The helical transmembrane segment at 39-59 (TSLLLGTLIFCAVLGNACVVA) threads the bilayer. Over 60–73 (AIALERSLQNVANY) the chain is Cytoplasmic. The chain crosses the membrane as a helical span at residues 74-98 (LIGSLAVTDLMVSVLVLPMAALYQV). Topologically, residues 99–107 (LNKWTLGQV) are extracellular. Residues 108-132 (TCDLFIALDVLCCTSSILHLCAIAL) form a helical membrane-spanning segment. An intrachain disulfide couples cysteine 109 to cysteine 187. Residues aspartate 116 and cysteine 120 each contribute to the serotonin site. The short motif at 133-135 (DRY) is the DRY motif; important for ligand-induced conformation changes element. The Cytoplasmic segment spans residues 133–152 (DRYWAITDPIDYVNKRTPRR). A helical membrane pass occupies residues 153–174 (AAALISLTWLIGFLISIPPMLG). Topologically, residues 175–193 (WRTPEDRSDPDACTISKDH) are extracellular. Residues 194-216 (GYTIYSTFGAFYIPLLLMLVLYG) form a helical membrane-spanning segment. The Cytoplasmic segment spans residues 217–346 (RIFRAARFRI…LARERKTVKT (130 aa)). Positions 235-261 (KKGAGTSLGTSSAPPPKKSLNGQPGSG) are disordered. 3 residues coordinate 1D-myo-inositol 4-phosphate: lysine 345, threonine 346, and glycine 352. A helical membrane pass occupies residues 347 to 370 (LGIIMGTFILCWLPFFIVALVLPF). Residues 371–378 (CESSCHMP) are Extracellular-facing. A helical transmembrane segment spans residues 379-403 (ALLGAIINWLGYSNSLLNPVIYAYF). The NPxxY motif; important for ligand-induced conformation changes and signaling signature appears at 396 to 400 (NPVIY). 3 residues coordinate 1D-myo-inositol 4-phosphate: phenylalanine 403, asparagine 404, and lysine 405. At 404-422 (NKDFQNAFKKIIKCKFCRR) the chain is on the cytoplasmic side.

Belongs to the G-protein coupled receptor 1 family. 5-hydroxytryptamine receptor subfamily. HTR1A sub-subfamily. As to quaternary structure, heterodimer; heterodimerizes with GPER1. Interacts with YIF1B. Interacts with GPR39 and GALR1. In terms of tissue distribution, detected in hypothalamus, mesencephalon, amygdala, medulla, thalamus, septum and hippocampus.

It localises to the cell membrane. The protein resides in the cell projection. It is found in the dendrite. G-protein coupled receptor activity is regulated by lipids: phosphatidylinositol 4-phosphate increases HTR1A-mediated activity. In terms of biological role, G-protein coupled receptor for 5-hydroxytryptamine (serotonin). Also functions as a receptor for various drugs and psychoactive substances. Ligand binding causes a conformation change that triggers signaling via guanine nucleotide-binding proteins (G proteins) and modulates the activity of downstream effectors, such as adenylate cyclase. HTR1A is coupled to G(i)/G(o) G alpha proteins and mediates inhibitory neurotransmission: signaling inhibits adenylate cyclase activity and activates a phosphatidylinositol-calcium second messenger system that regulates the release of Ca(2+) ions from intracellular stores. Beta-arrestin family members regulate signaling by mediating both receptor desensitization and resensitization processes. The chain is 5-hydroxytryptamine receptor 1A from Rattus norvegicus (Rat).